The primary structure comprises 258 residues: Snake venom serine proteinase 8 (258 aa).

An N-terminal signal peptide occupies residues 1-18 (MVLIRVLANLLILQLSYA). Residues 19 to 24 (QKSSEL) constitute a propeptide that is removed on maturation. One can recognise a Peptidase S1 domain in the interval 25–249 (VIGGDECNIN…YNDWIQSIIA (225 aa)). 6 disulfide bridges follow: cysteine 31-cysteine 163, cysteine 50-cysteine 66, cysteine 98-cysteine 256, cysteine 142-cysteine 210, cysteine 174-cysteine 189, and cysteine 200-cysteine 225. Asparagine 44 carries an N-linked (GlcNAc...) asparagine glycan. Residues histidine 65 and aspartate 110 each act as charge relay system in the active site. Serine 204 (charge relay system) is an active-site residue.

Belongs to the peptidase S1 family. Snake venom subfamily. In terms of assembly, monomer. As to expression, expressed by the venom gland.

The protein localises to the secreted. Snake venom serine protease that may act in the hemostasis system of the prey. In Crotalus adamanteus (Eastern diamondback rattlesnake), this protein is Snake venom serine proteinase 8.